Consider the following 940-residue polypeptide: Isoleucine--tRNA ligase (940 aa).

Residues Pro-58–His-68 carry the 'HIGH' region motif. Residue Glu-564 participates in L-isoleucyl-5'-AMP binding. Positions Lys-605–Ser-609 match the 'KMSKS' region motif. An ATP-binding site is contributed by Lys-608. Zn(2+)-binding residues include Cys-903, Cys-906, Cys-923, and Cys-926.

The protein belongs to the class-I aminoacyl-tRNA synthetase family. IleS type 1 subfamily. As to quaternary structure, monomer. Zn(2+) serves as cofactor.

It is found in the cytoplasm. It catalyses the reaction tRNA(Ile) + L-isoleucine + ATP = L-isoleucyl-tRNA(Ile) + AMP + diphosphate. Its function is as follows. Catalyzes the attachment of isoleucine to tRNA(Ile). As IleRS can inadvertently accommodate and process structurally similar amino acids such as valine, to avoid such errors it has two additional distinct tRNA(Ile)-dependent editing activities. One activity is designated as 'pretransfer' editing and involves the hydrolysis of activated Val-AMP. The other activity is designated 'posttransfer' editing and involves deacylation of mischarged Val-tRNA(Ile). This Shewanella baltica (strain OS195) protein is Isoleucine--tRNA ligase.